The sequence spans 320 residues: Zona pellucida-binding protein 1 (320 aa).

N-linked (GlcNAc...) asparagine glycans are attached at residues N85 and N158.

Belongs to the zona pellucida-binding protein Sp38 family.

The protein localises to the cytoplasmic vesicle. The protein resides in the secretory vesicle. It localises to the acrosome. It is found in the secreted. Its subcellular location is the acrosome membrane. Functionally, plays a role in sperm morphogenesis and in sperm-oocyte interaction during fertilization. The protein is Zona pellucida-binding protein 1 (ZPBP1) of Gallus gallus (Chicken).